We begin with the raw amino-acid sequence, 514 residues long: ATP synthase subunit alpha (514 aa).

An ATP-binding site is contributed by 170–177; the sequence is GDRQTGKT.

Belongs to the ATPase alpha/beta chains family. As to quaternary structure, F-type ATPases have 2 components, CF(1) - the catalytic core - and CF(0) - the membrane proton channel. CF(1) has five subunits: alpha(3), beta(3), gamma(1), delta(1), epsilon(1). CF(0) has three main subunits: a(1), b(2) and c(9-12). The alpha and beta chains form an alternating ring which encloses part of the gamma chain. CF(1) is attached to CF(0) by a central stalk formed by the gamma and epsilon chains, while a peripheral stalk is formed by the delta and b chains.

It localises to the cell inner membrane. The enzyme catalyses ATP + H2O + 4 H(+)(in) = ADP + phosphate + 5 H(+)(out). Produces ATP from ADP in the presence of a proton gradient across the membrane. The alpha chain is a regulatory subunit. The protein is ATP synthase subunit alpha of Psychrobacter cryohalolentis (strain ATCC BAA-1226 / DSM 17306 / VKM B-2378 / K5).